The chain runs to 261 residues: Carnitinyl-CoA dehydratase (261 aa).

E111 (nucleophile) is an active-site residue. The active-site Proton acceptor is the E131.

Belongs to the enoyl-CoA hydratase/isomerase family.

The catalysed reaction is (R)-carnitinyl-CoA = crotonobetainyl-CoA + H2O. It participates in amine and polyamine metabolism; carnitine metabolism. Its function is as follows. Catalyzes the reversible dehydration of L-carnitinyl-CoA to crotonobetainyl-CoA. This Shigella flexneri protein is Carnitinyl-CoA dehydratase.